Reading from the N-terminus, the 390-residue chain is Putative RING-H2 finger protein ATL12 (390 aa).

A signal peptide spans 1–22 (MNSPQEISILFFFIIFLDYVSA). Residues 41-61 (LAIITGVFSIVFTLTFVLLVY) traverse the membrane as a helical segment. Residues 124-166 (CSVCLSKFEDVEILRLLPKCRHAFHIGCIDQWLEQHATCPLCR) form an RING-type; atypical zinc finger.

Belongs to the RING-type zinc finger family. ATL subfamily.

Its subcellular location is the membrane. The catalysed reaction is S-ubiquitinyl-[E2 ubiquitin-conjugating enzyme]-L-cysteine + [acceptor protein]-L-lysine = [E2 ubiquitin-conjugating enzyme]-L-cysteine + N(6)-ubiquitinyl-[acceptor protein]-L-lysine.. The protein operates within protein modification; protein ubiquitination. The protein is Putative RING-H2 finger protein ATL12 (ATL12) of Arabidopsis thaliana (Mouse-ear cress).